The sequence spans 1135 residues: MSSLSRELVFLILQFLDEEKFKDTVHRLEKESGFFFNMRYFEDSVTAGEWDDVEKYLSGFTKVDDNRYSMKIFFEIRKQKYLEALDKKDHAKAVDILVKELKVFSTFNEELFKEITMLLTLTNFRENEQLSKYGDTKSARGIMLGELKKLIEANPLFRDKLQFPSLKNSRLRTLINQSLNWQHQLCKNPRPNPDIKTLFVDHTCGHPNGAHTPSPTTNHLMGSVPKVGGFPPLGAHGPFQPTPAPLTTSLAGWMPNPSVQHPTVSAGPIGLGAPNSAVSMLKRERPRSPPTNSLSMDYQTADSESVLKRPRPFGISDGVNNLPVNVLPVTYPGQSHAHATYSTDDLPKNVSRILSQGSAIKSMDFHPVQQTMLLVGTNLGDIAIWEVGSREKLVSRSFKVWDLATCTVNLQASLASEYTAAVNRVVWSPDGGLLGVAYSKHIVHIYSYHGGEDLRNHLEIDAHAGNVNDLAFSQPNQQLCVVTCGEDKTIKVWDAVTGNKLHTFEGHEAPVYSVCPHQKENIQFIFSTAVDGKIKAWLYDNMGSRVDYDAPGRSCTSMAYCADGTRLFSCGTSKEGESFIVEWNESEGAVKRTYLGLGKRSVGVVQFDTMKNKFLVAGDEFQVKFWDMDSVDLLSSTAAEGGLPSSPCLRINKEGTLLAVSTTDNGIKILANAEGSRILHSMANRGLDSSRAPPGSVAKGPIVGTFGTPNSSTGMSLSMGERSGPVASVTGLNGDNRSLPDVKPRIADDAEKSKTWKLTEISERSQLRTLRLPDTLLPARVVKLIYTNSGGAILALAENAAHKLWKWQKSERNLLGKANSNVPPQLWQPSSGVLMTNDTREGNKEDVVPCFALSKNDSYVMSASGGKISLFNMMTFKTMTTFMAPPPAATSLAFHPQDNNIIAIGMDDSSIQIYNVRVDEVKSKLKGHQKRVTGLAFSNVLNVLVSSGADSQLCVWSMDGWEKQASKQIQIPSGHSPNPLAHTRVQFHQDQIHVLVVHASQLAIYEAPKLENMKQWIPKESSGSVTDAVYSCDSQSIYAAFDDGSVSILTATTLQLKCRIGPNSYLPSNPSSRVYPATVAAHPSEPNQFAVGLTDGGVHVIEPPGPEGKWGISAPPENGAGPSVSSAPGSDQQPR.

Positions Leu-4–Phe-36 constitute a LisH domain. The CTLH domain maps to Phe-34–Lys-92. Ser-214 bears the Phosphoserine mark. Residues Leu-281–Ser-303 form a disordered region. Over residues Pro-290–Ser-303 the composition is skewed to polar residues. WD repeat units follow at residues Ser-355 to Ser-395, Glu-417 to Asn-456, Ala-462 to Thr-503, Gly-506 to Asp-547, Ala-550 to Thr-593, Leu-597 to Ser-636, Ala-638 to His-680, Leu-776 to Leu-815, Asn-843 to Thr-881, Ala-884 to Lys-924, Gly-927 to Ser-966, and Glu-1020 to Arg-1059. Residues Asp-1095–Arg-1135 form a disordered region. Residues Gly-1119–Arg-1135 are compositionally biased toward low complexity.

As to quaternary structure, tetramer. Interacts with WUS (via the C-terminal domain). Interacts with SPL (via EAR motif). Interacts with SPEAR3/TIE1. Binds to and corepresses GAF1/IDD2 at the promoter of GA20OX2 gene.

The protein localises to the nucleus. Its function is as follows. Transcription corepressor of Zinc finger transcription factors GAF1/IDD2 and ENY/IDD1 in regulation of gibberellin homeostasis and signaling. The sequence is that of Topless-related protein 4 (TPR4) from Arabidopsis thaliana (Mouse-ear cress).